The following is a 753-amino-acid chain: 5-methyltetrahydropteroyltriglutamate--homocysteine methyltransferase (753 aa).

Residues 17-20 and lysine 117 each bind 5-methyltetrahydropteroyltri-L-glutamate; that span reads RELK. L-homocysteine contacts are provided by residues 431 to 433 and glutamate 484; that span reads IGS. L-methionine-binding positions include 431 to 433 and glutamate 484; that span reads IGS. 5-methyltetrahydropteroyltri-L-glutamate contacts are provided by residues 515–516 and tryptophan 561; that span reads RC. Aspartate 599 serves as a coordination point for L-homocysteine. Aspartate 599 lines the L-methionine pocket. Glutamate 605 contacts 5-methyltetrahydropteroyltri-L-glutamate. Zn(2+) is bound by residues histidine 641, cysteine 643, and glutamate 665. The Proton donor role is filled by histidine 694. Cysteine 726 is a binding site for Zn(2+).

The protein belongs to the vitamin-B12 independent methionine synthase family. It depends on Zn(2+) as a cofactor.

The catalysed reaction is 5-methyltetrahydropteroyltri-L-glutamate + L-homocysteine = tetrahydropteroyltri-L-glutamate + L-methionine. It functions in the pathway amino-acid biosynthesis; L-methionine biosynthesis via de novo pathway; L-methionine from L-homocysteine (MetE route): step 1/1. Its function is as follows. Catalyzes the transfer of a methyl group from 5-methyltetrahydrofolate to homocysteine resulting in methionine formation. The chain is 5-methyltetrahydropteroyltriglutamate--homocysteine methyltransferase from Enterobacter sp. (strain 638).